The chain runs to 356 residues: GDSL esterase/lipase At2g36325 (356 aa).

The N-terminal stretch at 1–26 (MNITKLTPWFLFSCLILLSDYIKVNS) is a signal peptide. A glycan (N-linked (GlcNAc...) asparagine) is linked at Asn-25. Ser-54 functions as the Nucleophile in the catalytic mechanism. N-linked (GlcNAc...) asparagine glycans are attached at residues Asn-165, Asn-185, and Asn-240. Catalysis depends on residues Asp-334 and His-337.

It belongs to the 'GDSL' lipolytic enzyme family.

The protein resides in the secreted. This Arabidopsis thaliana (Mouse-ear cress) protein is GDSL esterase/lipase At2g36325.